Consider the following 282-residue polypeptide: Anamorsin homolog (282 aa).

The interval 5-151 (VDTNNFVLLL…EVGAKTALSL (147 aa)) is N-terminal SAM-like domain. The linker stretch occupies residues 152–196 (SFAPKPAQPKAETSAAQIWTLSAQDIDDEDVDLLDSDTLLDEDDL). The [2Fe-2S] cluster site is built by C208, C218, C221, and C223. Residues 208–223 (CGPGSGKKKACKNCTC) form a fe-S binding site A region. [4Fe-4S] cluster is bound by residues C243, C246, C254, and C257. Short sequence motifs (cx2C motif) lie at residues 243–246 (CGSC) and 254–257 (CSTC). Positions 243-257 (CGSCYLGDAFRCSTC) are fe-S binding site B.

This sequence belongs to the anamorsin family. As to quaternary structure, monomer. The cofactor is [2Fe-2S] cluster. It depends on [4Fe-4S] cluster as a cofactor.

It is found in the cytoplasm. Its subcellular location is the mitochondrion intermembrane space. Component of the cytosolic iron-sulfur (Fe-S) protein assembly (CIA) machinery. Required for the maturation of extramitochondrial Fe-S proteins. Part of an electron transfer chain functioning in an early step of cytosolic Fe-S biogenesis, facilitating the de novo assembly of a [4Fe-4S] cluster on the cytosolic Fe-S scaffold complex. Electrons are transferred from NADPH via a FAD- and FMN-containing diflavin oxidoreductase. Together with the diflavin oxidoreductase, also required for the assembly of the diferric tyrosyl radical cofactor of ribonucleotide reductase (RNR), probably by providing electrons for reduction during radical cofactor maturation in the catalytic small subunit. In Nematostella vectensis (Starlet sea anemone), this protein is Anamorsin homolog.